We begin with the raw amino-acid sequence, 372 residues long: Queuine tRNA-ribosyltransferase (372 aa).

D89 (proton acceptor) is an active-site residue. Substrate contacts are provided by residues 89 to 93, D161, and G232; that span reads DSGGF. Residues 262–268 form an RNA binding region; the sequence is GIGDLPS. The active-site Nucleophile is D281. Residues 286–290 are RNA binding; important for wobble base 34 recognition; it reads TKAAR. C319, C321, C324, and H351 together coordinate Zn(2+).

It belongs to the queuine tRNA-ribosyltransferase family. As to quaternary structure, homodimer. Within each dimer, one monomer is responsible for RNA recognition and catalysis, while the other monomer binds to the replacement base PreQ1. Zn(2+) is required as a cofactor.

The catalysed reaction is 7-aminomethyl-7-carbaguanine + guanosine(34) in tRNA = 7-aminomethyl-7-carbaguanosine(34) in tRNA + guanine. The protein operates within tRNA modification; tRNA-queuosine biosynthesis. Catalyzes the base-exchange of a guanine (G) residue with the queuine precursor 7-aminomethyl-7-deazaguanine (PreQ1) at position 34 (anticodon wobble position) in tRNAs with GU(N) anticodons (tRNA-Asp, -Asn, -His and -Tyr). Catalysis occurs through a double-displacement mechanism. The nucleophile active site attacks the C1' of nucleotide 34 to detach the guanine base from the RNA, forming a covalent enzyme-RNA intermediate. The proton acceptor active site deprotonates the incoming PreQ1, allowing a nucleophilic attack on the C1' of the ribose to form the product. After dissociation, two additional enzymatic reactions on the tRNA convert PreQ1 to queuine (Q), resulting in the hypermodified nucleoside queuosine (7-(((4,5-cis-dihydroxy-2-cyclopenten-1-yl)amino)methyl)-7-deazaguanosine). The chain is Queuine tRNA-ribosyltransferase from Chlamydia muridarum (strain MoPn / Nigg).